Here is a 502-residue protein sequence, read N- to C-terminus: Maturase K (502 aa).

The protein belongs to the intron maturase 2 family. MatK subfamily.

Its subcellular location is the plastid. The protein localises to the chloroplast. Functionally, usually encoded in the trnK tRNA gene intron. Probably assists in splicing its own and other chloroplast group II introns. This chain is Maturase K, found in Fremontodendron californicum (California flannelbush).